The sequence spans 266 residues: Hydroxyethylthiazole kinase (266 aa).

M46 contributes to the substrate binding site. 2 residues coordinate ATP: K122 and T166. Position 193 (G193) interacts with substrate.

This sequence belongs to the Thz kinase family. Requires Mg(2+) as cofactor.

It catalyses the reaction 5-(2-hydroxyethyl)-4-methylthiazole + ATP = 4-methyl-5-(2-phosphooxyethyl)-thiazole + ADP + H(+). Its pathway is cofactor biosynthesis; thiamine diphosphate biosynthesis; 4-methyl-5-(2-phosphoethyl)-thiazole from 5-(2-hydroxyethyl)-4-methylthiazole: step 1/1. Its function is as follows. Catalyzes the phosphorylation of the hydroxyl group of 4-methyl-5-beta-hydroxyethylthiazole (THZ). This Caldivirga maquilingensis (strain ATCC 700844 / DSM 13496 / JCM 10307 / IC-167) protein is Hydroxyethylthiazole kinase.